A 341-amino-acid polypeptide reads, in one-letter code: S-adenosylmethionine:tRNA ribosyltransferase-isomerase (341 aa).

Belongs to the QueA family. Monomer.

The protein resides in the cytoplasm. The catalysed reaction is 7-aminomethyl-7-carbaguanosine(34) in tRNA + S-adenosyl-L-methionine = epoxyqueuosine(34) in tRNA + adenine + L-methionine + 2 H(+). The protein operates within tRNA modification; tRNA-queuosine biosynthesis. Functionally, transfers and isomerizes the ribose moiety from AdoMet to the 7-aminomethyl group of 7-deazaguanine (preQ1-tRNA) to give epoxyqueuosine (oQ-tRNA). The sequence is that of S-adenosylmethionine:tRNA ribosyltransferase-isomerase from Clostridium botulinum (strain Kyoto / Type A2).